Reading from the N-terminus, the 302-residue chain is MAWNVFKFCTALRALGSIMILIVIGIIGFTYYAVVVVNYGPALLIGGVDSLLSVLVLAFFHFLLIMLLWSYFSVVVTDPGGVPTGWRPELDIEKSEGNQALIGEASVGDSSSHGVRYCRKCNQYKPPRSHHCSVCGRCILKMDHHCVWVVNCVGANNYKSFLLFLFYTFLETTVVAVSLLPIFLVFFSDGDGDITVSPGSLAASFVAFVLNIAFALSVLGFLIMHIMLVARNTTTIEAYEKHTVNWPYNVGRKTNFEQVFGSDKMYWFVPLYTEDDKKKLPALGGLDFTSRSESETEPLQSL.

The next 2 helical transmembrane spans lie at 17–37 (SIMI…VVVV) and 56–76 (VLAF…SVVV). A DHHC domain is found at 116-166 (RYCRKCNQYKPPRSHHCSVCGRCILKMDHHCVWVVNCVGANNYKSFLLFLF). Cysteine 146 acts as the S-palmitoyl cysteine intermediate in catalysis. The next 2 membrane-spanning stretches (helical) occupy residues 166 to 186 (FYTF…FLVF) and 204 to 224 (SFVA…FLIM).

Belongs to the DHHC palmitoyltransferase family.

The protein resides in the cell membrane. The protein localises to the cytoplasmic vesicle membrane. The catalysed reaction is L-cysteinyl-[protein] + hexadecanoyl-CoA = S-hexadecanoyl-L-cysteinyl-[protein] + CoA. Palmitoyl acyltransferase. The chain is Probable protein S-acyltransferase 13 (PAT13) from Arabidopsis thaliana (Mouse-ear cress).